Here is a 428-residue protein sequence, read N- to C-terminus: Histone-lysine N-methyltransferase SMYD3 (428 aa).

The residue at position 1 (Met1) is an N-acetylmethionine. Residues Leu4–Leu240 form the SET domain. Position 14–16 (Arg14–Asn16) interacts with S-adenosyl-L-methionine. Residues Cys49, Cys52, Cys62, Cys65, Cys71, Cys75, His83, and Cys87 each contribute to the Zn(2+) site. An MYND-type zinc finger spans residues Cys49–Cys87. S-adenosyl-L-methionine contacts are provided by residues Tyr124, Asn132, Asn205–His206, Tyr239, and Phe259. The tract at residues Asp272–Ser428 is C-terminal domain; essential for histone methyltransferase activity, nuclear localization and mediates interaction with HSP90AA1.

Belongs to the class V-like SAM-binding methyltransferase superfamily. Histone-lysine methyltransferase family. As to quaternary structure, interacts with HSPCA. Interacts with HELZ. Interacts with POLR2A; the interaction may be indirect and may be mediated by HELZ. Interacts with HSP90AA1; this interaction enhances SMYD3 histone-lysine N-methyltransferase.

The protein resides in the cytoplasm. It localises to the nucleus. It carries out the reaction L-lysyl(4)-[histone H3] + 3 S-adenosyl-L-methionine = N(6),N(6),N(6)-trimethyl-L-lysyl(4)-[histone H3] + 3 S-adenosyl-L-homocysteine + 3 H(+). With respect to regulation, histone methyltransferase activity strongly stimulated by HSPCA. Histone methyltransferase. Specifically methylates 'Lys-4' of histone H3, inducing di- and tri-methylation, but not monomethylation. Also methylates 'Lys-5' of histone H4. Plays an important role in transcriptional activation as a member of an RNA polymerase complex. Binds DNA containing 5'-CCCTCC-3' or 5'-GAGGGG-3' sequences. This chain is Histone-lysine N-methyltransferase SMYD3 (Smyd3), found in Mus musculus (Mouse).